Consider the following 413-residue polypeptide: Multifunctional CCA protein (413 aa).

Residues Gly8 and Arg11 each coordinate ATP. CTP-binding residues include Gly8 and Arg11. Mg(2+) contacts are provided by Asp21 and Asp23. Positions 91, 137, and 140 each coordinate ATP. CTP contacts are provided by Arg91, Arg137, and Arg140. Residues Thr228–Trp329 form the HD domain.

The protein belongs to the tRNA nucleotidyltransferase/poly(A) polymerase family. Bacterial CCA-adding enzyme type 1 subfamily. In terms of assembly, monomer. Can also form homodimers and oligomers. Mg(2+) is required as a cofactor. The cofactor is Ni(2+).

It carries out the reaction a tRNA precursor + 2 CTP + ATP = a tRNA with a 3' CCA end + 3 diphosphate. It catalyses the reaction a tRNA with a 3' CCA end + 2 CTP + ATP = a tRNA with a 3' CCACCA end + 3 diphosphate. Catalyzes the addition and repair of the essential 3'-terminal CCA sequence in tRNAs without using a nucleic acid template. Adds these three nucleotides in the order of C, C, and A to the tRNA nucleotide-73, using CTP and ATP as substrates and producing inorganic pyrophosphate. tRNA 3'-terminal CCA addition is required both for tRNA processing and repair. Also involved in tRNA surveillance by mediating tandem CCA addition to generate a CCACCA at the 3' terminus of unstable tRNAs. While stable tRNAs receive only 3'-terminal CCA, unstable tRNAs are marked with CCACCA and rapidly degraded. This Klebsiella pneumoniae subsp. pneumoniae (strain ATCC 700721 / MGH 78578) protein is Multifunctional CCA protein.